The primary structure comprises 807 residues: Protein WEAK CHLOROPLAST MOVEMENT UNDER BLUE LIGHT 1 (807 aa).

A disordered region spans residues 1–162; that stretch reads MEDLKTVEAS…GTPKNVDSHR (162 aa). The segment covering 31 to 40 has biased composition (polar residues); sequence RESNIQSATK. A compositionally biased stretch (low complexity) spans 46-73; that stretch reads QSQTDTEETQQSQTDTEETQQSQTDDTT. The segment covering 138-157 has biased composition (polar residues); it reads RTVSSPRFSGSPVSTGTPKN. Position 148 is a phosphoserine (Ser-148). Coiled-coil stretches lie at residues 191-429, 457-489, 516-621, and 664-724; these read RMQA…ELVA, DLHA…LKLA, IAVA…ALEE, and AAVS…WRAE. Disordered regions lie at residues 532-565 and 722-789; these read IASV…EAKS and RAEH…KKKK. Composition is skewed to basic and acidic residues over residues 537 to 548, 722 to 732, and 739 to 749; these read SKEKDAREKMVE, RAEHEQKRKAG, and KNLKESFEGGK. The span at 761–781 shows a compositional bias: polar residues; that stretch reads SSPSESYGTEENSETNLSPQT.

It belongs to the WEB family. Interacts with PMI2. As to expression, ubiquitous but preferentially in chloroplast-containing tissues.

It localises to the cytoplasm. Functionally, required for the chloroplast avoidance response under high intensity blue light. This avoidance response consists in the relocation of chloroplasts on the anticlinal side of exposed cells. Acts in association with PMI2 to maintain the velocity of chloroplast photorelocation movement via cp-actin filaments regulation. The sequence is that of Protein WEAK CHLOROPLAST MOVEMENT UNDER BLUE LIGHT 1 (WEB1) from Arabidopsis thaliana (Mouse-ear cress).